The following is a 166-amino-acid chain: 3-isopropylmalate dehydratase small subunit 1 (166 aa).

The protein belongs to the LeuD family. LeuD type 2 subfamily. In terms of assembly, heterodimer of LeuC and LeuD.

It carries out the reaction (2R,3S)-3-isopropylmalate = (2S)-2-isopropylmalate. Its pathway is amino-acid biosynthesis; L-leucine biosynthesis; L-leucine from 3-methyl-2-oxobutanoate: step 2/4. In terms of biological role, catalyzes the isomerization between 2-isopropylmalate and 3-isopropylmalate, via the formation of 2-isopropylmaleate. In Thermotoga maritima (strain ATCC 43589 / DSM 3109 / JCM 10099 / NBRC 100826 / MSB8), this protein is 3-isopropylmalate dehydratase small subunit 1 (leuD1).